We begin with the raw amino-acid sequence, 165 residues long: Large ribosomal subunit protein uL10 (165 aa).

This sequence belongs to the universal ribosomal protein uL10 family. In terms of assembly, part of the ribosomal stalk of the 50S ribosomal subunit. The N-terminus interacts with L11 and the large rRNA to form the base of the stalk. The C-terminus forms an elongated spine to which L12 dimers bind in a sequential fashion forming a multimeric L10(L12)X complex.

Forms part of the ribosomal stalk, playing a central role in the interaction of the ribosome with GTP-bound translation factors. The polypeptide is Large ribosomal subunit protein uL10 (Burkholderia thailandensis (strain ATCC 700388 / DSM 13276 / CCUG 48851 / CIP 106301 / E264)).